The primary structure comprises 351 residues: Protein Wnt-4 (351 aa).

The signal sequence occupies residues 1-22; sequence MSPRSCLRSLRLLVFAVFSAAA. 11 disulfide bridges follow: cysteine 78-cysteine 89, cysteine 128-cysteine 136, cysteine 138-cysteine 155, cysteine 206-cysteine 220, cysteine 208-cysteine 215, cysteine 280-cysteine 311, cysteine 296-cysteine 306, cysteine 310-cysteine 350, cysteine 326-cysteine 341, cysteine 328-cysteine 338, and cysteine 333-cysteine 334. An N-linked (GlcNAc...) asparagine glycan is attached at asparagine 88. Serine 212 carries O-palmitoleoyl serine; by PORCN lipidation. Asparagine 297 is a glycosylation site (N-linked (GlcNAc...) asparagine).

The protein belongs to the Wnt family. In terms of assembly, interacts with PORCN. Interacts with PKD1. Palmitoleoylation is required for efficient binding to frizzled receptors. Depalmitoleoylation leads to Wnt signaling pathway inhibition. As to expression, in adults in lung and brain.

It localises to the secreted. It is found in the extracellular space. The protein localises to the extracellular matrix. Its function is as follows. Ligand for members of the frizzled family of seven transmembrane receptors. Plays an important role in the embryonic development of the urogenital tract and the lung. Required for normal mesenchyme to epithelium transition during embryonic kidney development. Required for the formation of early epithelial renal vesicles during kidney development. Required for normal formation of the Mullerian duct in females, and normal levels of oocytes in the ovaries. Required for normal down-regulation of 3 beta-hydroxysteroid dehydrogenase in the ovary. Required for normal lung development and for normal patterning of trachael cartilage rings. The protein is Protein Wnt-4 (Wnt4) of Mus musculus (Mouse).